The chain runs to 232 residues: MKNLCIIPARGGSKRIPRKNIIDFLGKPLISYSIENALNSGIFDEVVLSSDDEEIIEVALKYGAKAPFVRDKNLSDDYASSTAVVQNAIEILQSQNQIYDHVCCLYATAPLLNKDILKQAYEKFIQNQSKFLFAATEFEYPIQRAFYLNENNQVYMFDEKHYKSRSQDLTKAYHDAGAFYFGTSKAWLEEDFIFKPHSSVFVLPRNLVCDIDTIQDLEFAKILYKVNHESAF.

Belongs to the CMP-NeuNAc synthase family. Mg(2+) serves as cofactor.

The enzyme catalyses pseudaminate + CTP = CMP-pseudaminate + diphosphate. In terms of biological role, catalyzes the final step in the biosynthesis of pseudaminic acid, a sialic-acid-like sugar that is used to modify flagellin. Mediates the activation of pseudaminic acid with CMP by forming CMP-pseudaminic acid. In Campylobacter jejuni subsp. jejuni serotype O:2 (strain ATCC 700819 / NCTC 11168), this protein is Pseudaminic acid cytidylyltransferase (pseF).